The sequence spans 95 residues: Pyrimidine/purine nucleoside phosphorylase (95 aa).

This sequence belongs to the nucleoside phosphorylase PpnP family.

The catalysed reaction is a purine D-ribonucleoside + phosphate = a purine nucleobase + alpha-D-ribose 1-phosphate. The enzyme catalyses adenosine + phosphate = alpha-D-ribose 1-phosphate + adenine. It carries out the reaction cytidine + phosphate = cytosine + alpha-D-ribose 1-phosphate. It catalyses the reaction guanosine + phosphate = alpha-D-ribose 1-phosphate + guanine. The catalysed reaction is inosine + phosphate = alpha-D-ribose 1-phosphate + hypoxanthine. The enzyme catalyses thymidine + phosphate = 2-deoxy-alpha-D-ribose 1-phosphate + thymine. It carries out the reaction uridine + phosphate = alpha-D-ribose 1-phosphate + uracil. It catalyses the reaction xanthosine + phosphate = alpha-D-ribose 1-phosphate + xanthine. In terms of biological role, catalyzes the phosphorolysis of diverse nucleosides, yielding D-ribose 1-phosphate and the respective free bases. Can use uridine, adenosine, guanosine, cytidine, thymidine, inosine and xanthosine as substrates. Also catalyzes the reverse reactions. The sequence is that of Pyrimidine/purine nucleoside phosphorylase from Yersinia enterocolitica serotype O:8 / biotype 1B (strain NCTC 13174 / 8081).